A 228-amino-acid chain; its full sequence is MYDVTEWKHVFKLDPNKDLPDEQLEILCESGTDAVIIGGSDGVTEDNVLRMMSKVRRFLVPCVLEVSAIEAIVPGFDLYFIPSVLNSKNADWIVGMHQKAMKEYGELMSMEEIVAEGYCIANPDCKAAALTEADADLNMDDIVAYARVSELLQLPIFYLEYSGVLGDIEAVKKTKAVLETSTLFYGGGIKDAETAKQYAEHADVIVVGNAVYEDFDRALKTVAAVKGE.

Residue lysine 12 coordinates sn-glycerol 1-phosphate. The Mg(2+) site is built by aspartate 14 and serine 40. Sn-glycerol 1-phosphate-binding positions include 158 to 163 (YLEYSG), glycine 188, and 208 to 209 (GN).

This sequence belongs to the GGGP/HepGP synthase family. Group I subfamily. In terms of assembly, homodimer. Mg(2+) is required as a cofactor.

The catalysed reaction is sn-glycerol 1-phosphate + all-trans-heptaprenyl diphosphate = 3-heptaprenyl-sn-glycero-1-phosphate + diphosphate. Its pathway is membrane lipid metabolism; glycerophospholipid metabolism. In terms of biological role, prenyltransferase that catalyzes in vivo the transfer of the heptaprenyl moiety of heptaprenyl pyrophosphate (HepPP; 35 carbon atoms) to the C3 hydroxyl of sn-glycerol-1-phosphate (G1P), producing heptaprenylglyceryl phosphate (HepGP). This reaction is an ether-bond-formation step in the biosynthesis of archaea-type G1P-based membrane lipids found in Bacillales. To a much lesser extent, is also able to use geranyl diphosphate (GPP; C10) and geranylgeranyl diphosphate (GGPP; C20) as the prenyl donors, but not farnesyl pyrophosphate (FPP; C15). Cannot use glycerol-3-phosphate (G3P) or 3-phosphoglycerate (3PG) as an acceptor. The sequence is that of Heptaprenylglyceryl phosphate synthase from Bacillus subtilis (strain 168).